Reading from the N-terminus, the 151-residue chain is Lipoprotein signal peptidase (151 aa).

The next 2 membrane-spanning stretches (helical) occupy residues 54–74 (GQMW…IYLI) and 83–103 (LLKI…IDRL). Residues Asp-110 and Asp-125 contribute to the active site. The chain crosses the membrane as a helical span at residues 120–140 (IFNIADSALTIGVGLFLLNIL).

The protein belongs to the peptidase A8 family.

It localises to the cell membrane. It carries out the reaction Release of signal peptides from bacterial membrane prolipoproteins. Hydrolyzes -Xaa-Yaa-Zaa-|-(S,diacylglyceryl)Cys-, in which Xaa is hydrophobic (preferably Leu), and Yaa (Ala or Ser) and Zaa (Gly or Ala) have small, neutral side chains.. It functions in the pathway protein modification; lipoprotein biosynthesis (signal peptide cleavage). In terms of biological role, this protein specifically catalyzes the removal of signal peptides from prolipoproteins. This Shouchella clausii (strain KSM-K16) (Alkalihalobacillus clausii) protein is Lipoprotein signal peptidase.